A 602-amino-acid chain; its full sequence is mRNA-capping enzyme subunit beta (602 aa).

Positions 1-249 (MSEHHSKRAL…NESNSEETHD (249 aa)) are disordered. Positions 15-42 (LVNHDENDKSKLQKLADNESSVRSDDNR) are enriched in basic and acidic residues. A compositionally biased stretch (low complexity) spans 48–64 (NIVNGNNSNSDLNSNGV). Positions 65-76 (IEEDTDTDDDVG) are enriched in acidic residues. Basic and acidic residues predominate over residues 88 to 110 (DYDKQDRFSPEKKRIQARKKDTS). Residues 114-128 (PSISNESPSNSKESS) are compositionally biased toward low complexity. Basic and acidic residues predominate over residues 141 to 169 (TDRKDSSEEKPDLTGPELVKEPDTNEYKR). Over residues 171–181 (SIQSITNAEDT) the composition is skewed to polar residues. Composition is skewed to basic and acidic residues over residues 213–222 (TEEHKPKTET) and 231–249 (QENK…ETHD). Lys276 serves as the catalytic N6-GMP-lysine intermediate.

This sequence belongs to the fungal TPase family. In terms of assembly, heterodimer. The mRNA-capping enzyme is composed of two separate chains alpha and beta, respectively a mRNA guanylyltransferase and an mRNA 5'-triphosphate monophosphatase. The cofactor is Mg(2+).

The protein resides in the nucleus. The catalysed reaction is a 5'-end triphospho-ribonucleoside in mRNA + H2O = a 5'-end diphospho-ribonucleoside in mRNA + phosphate + H(+). First step of mRNA capping. Converts the 5'-triphosphate end of a nascent mRNA chain into a diphosphate end. The chain is mRNA-capping enzyme subunit beta (CET1) from Candida glabrata (strain ATCC 2001 / BCRC 20586 / JCM 3761 / NBRC 0622 / NRRL Y-65 / CBS 138) (Yeast).